Reading from the N-terminus, the 171-residue chain is 2-vinyl bacteriochlorophyllide hydratase (171 aa).

It functions in the pathway porphyrin-containing compound metabolism; bacteriochlorophyll biosynthesis (light-independent). This Rhodobacter capsulatus (strain ATCC BAA-309 / NBRC 16581 / SB1003) protein is 2-vinyl bacteriochlorophyllide hydratase (bchF).